The chain runs to 393 residues: NAD(P)H-quinone oxidoreductase subunit H, chloroplastic (393 aa).

Belongs to the complex I 49 kDa subunit family. NDH is composed of at least 16 different subunits, 5 of which are encoded in the nucleus.

It is found in the plastid. The protein localises to the chloroplast thylakoid membrane. The catalysed reaction is a plastoquinone + NADH + (n+1) H(+)(in) = a plastoquinol + NAD(+) + n H(+)(out). The enzyme catalyses a plastoquinone + NADPH + (n+1) H(+)(in) = a plastoquinol + NADP(+) + n H(+)(out). Functionally, NDH shuttles electrons from NAD(P)H:plastoquinone, via FMN and iron-sulfur (Fe-S) centers, to quinones in the photosynthetic chain and possibly in a chloroplast respiratory chain. The immediate electron acceptor for the enzyme in this species is believed to be plastoquinone. Couples the redox reaction to proton translocation, and thus conserves the redox energy in a proton gradient. This chain is NAD(P)H-quinone oxidoreductase subunit H, chloroplastic, found in Nandina domestica (Heavenly bamboo).